Reading from the N-terminus, the 353-residue chain is UPF0283 membrane protein YcjF (353 aa).

Helical transmembrane passes span 70–90 (MVMGGLALFGASVVGQGVQWT), 100–120 (VALGGCAAGALIIGAGVGSVV), and 213–233 (ESTLMIAVSPLALVDMAFIAW).

The protein belongs to the UPF0283 family.

The protein resides in the cell inner membrane. The chain is UPF0283 membrane protein YcjF from Escherichia coli O7:K1 (strain IAI39 / ExPEC).